Here is a 293-residue protein sequence, read N- to C-terminus: Homoserine O-acetyltransferase (293 aa).

The active-site Acyl-thioester intermediate is Cys-141. Substrate-binding residues include Lys-162 and Ser-190. His-234 (proton acceptor) is an active-site residue. Residue Glu-236 is part of the active site. Arg-248 serves as a coordination point for substrate.

This sequence belongs to the MetA family.

It is found in the cytoplasm. The catalysed reaction is L-homoserine + acetyl-CoA = O-acetyl-L-homoserine + CoA. Its pathway is amino-acid biosynthesis; L-methionine biosynthesis via de novo pathway; O-acetyl-L-homoserine from L-homoserine: step 1/1. Functionally, transfers an acetyl group from acetyl-CoA to L-homoserine, forming acetyl-L-homoserine. The protein is Homoserine O-acetyltransferase of Campylobacter jejuni subsp. jejuni serotype O:2 (strain ATCC 700819 / NCTC 11168).